The primary structure comprises 424 residues: MACTLADSLLLFKGSYQKPVLRRDIAARYSPGIFSLNSNGLIQKRFRRQRNFVTRNKVTVIHAVAIPVQPAPVESAEYRKQLAEDYGFRQVGEPLSDDVTLKDVINPLPKEVFEIDDVKAWKSVLISVTSYALGLFMISKAPWYLLPLAWVWTGTAITGFFVIGHDCAHRSFSSNKLVEDIVGTLAFMPLIYPYEPWRFKHDRHHAKTNMLREDTAWHPVWKDEFESTPLLRKAIIYGYGPFRCWMSIAHWLMWHFDLKKFRPSEVPRVKISLACVFAFIAIGWPLIIYKTGIMGWIKFWLMPWLGYHFWMSTFTMVHHTAPYIPFKYSEEWNRAQAQLNGTVHCDYPKWIEILCHDINVHIPHHISPRIPSYNLRAAHKSLQENWGQYLNEASWNWRLMKTIMTVCQVYDKEKSLCCLRRTCP.

The transit peptide at Met1–Ala63 directs the protein to the chloroplast. Val64 is subject to N-acetylvaline. The short motif at His165 to His169 is the Histidine box-1 element. Positions His201–His205 match the Histidine box-2 motif. Positions His361–His365 match the Histidine box-3 motif.

Belongs to the fatty acid desaturase type 1 family.

It localises to the plastid. The protein resides in the chloroplast membrane. The catalysed reaction is a (9Z)-octadecenoyl-containing glycerolipid + 2 reduced [2Fe-2S]-[ferredoxin] + O2 + 2 H(+) = a (9Z,12Z)-octadecadienoyl-containing glycerolipid + 2 oxidized [2Fe-2S]-[ferredoxin] + 2 H2O. The protein operates within lipid metabolism; polyunsaturated fatty acid biosynthesis. Functionally, chloroplast omega-6 fatty acid desaturase introduces the second double bond in the biosynthesis of 16:3 and 18:3 fatty acids, important constituents of plant membranes. It is thought to use ferredoxin as an electron donor and to act on fatty acids esterified to galactolipids, sulfolipids and phosphatidylglycerol. The chain is Omega-6 fatty acid desaturase, chloroplastic from Glycine max (Soybean).